A 195-amino-acid polypeptide reads, in one-letter code: Transcriptional regulator GfcR (195 aa).

The protein belongs to the purine/pyrimidine phosphoribosyltransferase family. GfcR subfamily.

The chain is Transcriptional regulator GfcR from Picrophilus torridus (strain ATCC 700027 / DSM 9790 / JCM 10055 / NBRC 100828 / KAW 2/3).